We begin with the raw amino-acid sequence, 188 residues long: MYKFDYLVFIGRFQPFHFAHLQTIQIALQQSREVIIALGSAQPERNIKNPFLAEERQKMILANFSAEDQARIHFVNIIDVYNDQKWVEQVKQLVNAIIESRSHVGLIGHFKDESSYYLKLFPEWTMVELESLKESMSATPMREAYYEGKIIESAFPEGTIQFLKTFQDSEIYKQLQQKYRAQDSSNLI.

Belongs to the archaeal NMN adenylyltransferase family.

It catalyses the reaction beta-nicotinamide D-ribonucleotide + ATP + H(+) = diphosphate + NAD(+). It carries out the reaction nicotinate beta-D-ribonucleotide + ATP + H(+) = deamido-NAD(+) + diphosphate. It functions in the pathway cofactor biosynthesis; NAD(+) biosynthesis; NAD(+) from nicotinamide D-ribonucleotide: step 1/1. Its pathway is cofactor biosynthesis; NAD(+) biosynthesis; deamido-NAD(+) from nicotinate D-ribonucleotide: step 1/1. Functionally, dual substrate specificity enzyme that catalyzes the formation of NAD(+) from nicotinamide mononucleotide (NMN) and the formation of deamido-NAD(+) (NaAD) from nicotinate mononucleotide (NaMN). Shows nearly identical catalytic efficiency for both physiological substrates. Plays an essential role in all three routes of NAD biogenesis, de novo synthesis as well as the deamidating and nondeamidating salvage pathways. This chain is Nicotinamide/nicotinic acid mononucleotide adenylyltransferase, found in Acinetobacter baylyi (strain ATCC 33305 / BD413 / ADP1).